Consider the following 385-residue polypeptide: Carbohydrate diacid regulator (385 aa).

Belongs to the CdaR family.

Seems to regulate the expression of the operons for the enzymes involved in D-galactarate, D-glucarate and D-glycerate utilization. The sequence is that of Carbohydrate diacid regulator (cdaR) from Escherichia coli (strain K12).